The primary structure comprises 350 residues: Small ribosomal subunit biogenesis GTPase RsgA (350 aa).

Polar residues predominate over residues 1–17 (MSKNKLSKGQQRRVNAN). Residues 1 to 27 (MSKNKLSKGQQRRVNANHQRRLKTSAE) form a disordered region. One can recognise a CP-type G domain in the interval 104–273 (TSVLTRPDFY…VIDSPGVREF (170 aa)). GTP contacts are provided by residues 160–163 (NKID) and 214–222 (GQSGVGKSS). Zn(2+)-binding residues include Cys-297, Cys-302, His-304, and Cys-310.

Belongs to the TRAFAC class YlqF/YawG GTPase family. RsgA subfamily. As to quaternary structure, monomer. Associates with 30S ribosomal subunit, binds 16S rRNA. Zn(2+) is required as a cofactor.

It localises to the cytoplasm. Functionally, one of several proteins that assist in the late maturation steps of the functional core of the 30S ribosomal subunit. Helps release RbfA from mature subunits. May play a role in the assembly of ribosomal proteins into the subunit. Circularly permuted GTPase that catalyzes slow GTP hydrolysis, GTPase activity is stimulated by the 30S ribosomal subunit. This chain is Small ribosomal subunit biogenesis GTPase RsgA, found in Salmonella typhi.